The sequence spans 323 residues: Non-structural protein 9 (323 aa).

The tract at residues 1-142 (MFTSSAAKTG…GGSRPSQERG (142 aa)) is disordered. A compositionally biased stretch (low complexity) spans 33 to 49 (IDGSISSGPISTGPDSD). The span at 99 to 115 (PNHTDIGTSLGQVTTKG) shows a compositional bias: polar residues.

The protein localises to the host cytoplasm. Functionally, constituent of viral factories. The sequence is that of Non-structural protein 9 from Rice gall dwarf virus (RGDV).